We begin with the raw amino-acid sequence, 83 residues long: uncharacterized protein (83 aa).

This is an uncharacterized protein from Dictyostelium discoideum (Social amoeba).